A 126-amino-acid chain; its full sequence is Nucleoside diphosphate kinase B (126 aa).

ATP is bound by residues Lys-6, Phe-37, Thr-68, Arg-79, and Asn-89. The Pros-phosphohistidine intermediate role is filled by His-92.

Belongs to the NDK family. Mg(2+) serves as cofactor.

It is found in the cytoplasm. Its subcellular location is the nucleus. It localises to the cell projection. The protein resides in the lamellipodium. The protein localises to the ruffle. It catalyses the reaction a 2'-deoxyribonucleoside 5'-diphosphate + ATP = a 2'-deoxyribonucleoside 5'-triphosphate + ADP. It carries out the reaction a ribonucleoside 5'-diphosphate + ATP = a ribonucleoside 5'-triphosphate + ADP. Functionally, major role in the synthesis of nucleoside triphosphates other than ATP. The chain is Nucleoside diphosphate kinase B (nme2) from Merluccius capensis (Shallow-water Cape hake).